We begin with the raw amino-acid sequence, 481 residues long: Protein nucleotidyltransferase YdiU (481 aa).

Gly-85, Gly-87, Arg-88, Lys-108, Asp-120, Gly-121, Arg-171, and Arg-178 together coordinate ATP. The active-site Proton acceptor is the Asp-248. Asn-249 and Asp-258 together coordinate Mg(2+). Asp-258 contacts ATP. Residues 458 to 481 (HPGLAEFQQPPTPEQKGLQLSCSS) are disordered.

The protein belongs to the SELO family. It depends on Mg(2+) as a cofactor. Mn(2+) serves as cofactor.

The enzyme catalyses L-seryl-[protein] + ATP = 3-O-(5'-adenylyl)-L-seryl-[protein] + diphosphate. It catalyses the reaction L-threonyl-[protein] + ATP = 3-O-(5'-adenylyl)-L-threonyl-[protein] + diphosphate. The catalysed reaction is L-tyrosyl-[protein] + ATP = O-(5'-adenylyl)-L-tyrosyl-[protein] + diphosphate. It carries out the reaction L-histidyl-[protein] + UTP = N(tele)-(5'-uridylyl)-L-histidyl-[protein] + diphosphate. The enzyme catalyses L-seryl-[protein] + UTP = O-(5'-uridylyl)-L-seryl-[protein] + diphosphate. It catalyses the reaction L-tyrosyl-[protein] + UTP = O-(5'-uridylyl)-L-tyrosyl-[protein] + diphosphate. Nucleotidyltransferase involved in the post-translational modification of proteins. It can catalyze the addition of adenosine monophosphate (AMP) or uridine monophosphate (UMP) to a protein, resulting in modifications known as AMPylation and UMPylation. The chain is Protein nucleotidyltransferase YdiU from Hydrogenovibrio crunogenus (strain DSM 25203 / XCL-2) (Thiomicrospira crunogena).